The chain runs to 160 residues: SsrA-binding protein (160 aa).

Positions 131–160 (KKEYDKRHTERERDSDRELQRAVRTKGKED) are disordered.

The protein belongs to the SmpB family.

The protein resides in the cytoplasm. Its function is as follows. Required for rescue of stalled ribosomes mediated by trans-translation. Binds to transfer-messenger RNA (tmRNA), required for stable association of tmRNA with ribosomes. tmRNA and SmpB together mimic tRNA shape, replacing the anticodon stem-loop with SmpB. tmRNA is encoded by the ssrA gene; the 2 termini fold to resemble tRNA(Ala) and it encodes a 'tag peptide', a short internal open reading frame. During trans-translation Ala-aminoacylated tmRNA acts like a tRNA, entering the A-site of stalled ribosomes, displacing the stalled mRNA. The ribosome then switches to translate the ORF on the tmRNA; the nascent peptide is terminated with the 'tag peptide' encoded by the tmRNA and targeted for degradation. The ribosome is freed to recommence translation, which seems to be the essential function of trans-translation. This Pseudomonas fluorescens (strain ATCC BAA-477 / NRRL B-23932 / Pf-5) protein is SsrA-binding protein.